The chain runs to 319 residues: RNA polymerase II holoenzyme cyclin-like subunit (319 aa).

The Cyclin N-terminal domain maps to 53–142 (QQLIRLAKRL…LGECEFFMIS (90 aa)). Residues 237-251 (QGQQAQGGMPEPAAA) are compositionally biased toward low complexity. The segment at 237 to 261 (QGQQAQGGMPEPAAAEPKEKRQQDR) is disordered. Over residues 252–261 (EPKEKRQQDR) the composition is skewed to basic and acidic residues.

It belongs to the cyclin family. Cyclin C subfamily. Component of the SRB8-11 complex, a regulatory module of the Mediator complex. Interacts with SSN3/FCK1.

It localises to the nucleus. In terms of biological role, component of the SRB8-11 complex. The SRB8-11 complex is a regulatory module of the Mediator complex which is itself involved in regulation of basal and activated RNA polymerase II-dependent transcription. The SRB8-11 complex may be involved in the transcriptional repression of a subset of genes regulated by Mediator. It may inhibit the association of the Mediator complex with RNA polymerase II to form the holoenzyme complex. The SRB8-11 complex phosphorylates the C-terminal domain (CTD) of the largest subunit of RNA polymerase II. May play a role in signal transduction pathways regulating secondary metabolism and fungal development (conidiation). The chain is RNA polymerase II holoenzyme cyclin-like subunit (SSN8) from Gibberella moniliformis (Maize ear and stalk rot fungus).